A 365-amino-acid polypeptide reads, in one-letter code: Alanine racemase (365 aa).

K32 (proton acceptor; specific for D-alanine) is an active-site residue. At K32 the chain carries N6-(pyridoxal phosphate)lysine. R128 provides a ligand contact to substrate. Y257 serves as the catalytic Proton acceptor; specific for L-alanine. Residue M305 participates in substrate binding.

The protein belongs to the alanine racemase family. Pyridoxal 5'-phosphate serves as cofactor.

It carries out the reaction L-alanine = D-alanine. It participates in amino-acid biosynthesis; D-alanine biosynthesis; D-alanine from L-alanine: step 1/1. Its function is as follows. Catalyzes the interconversion of L-alanine and D-alanine. May also act on other amino acids. The protein is Alanine racemase (alr) of Francisella tularensis subsp. tularensis (strain SCHU S4 / Schu 4).